The chain runs to 1585 residues: Adhesion G protein-coupled receptor B2 (1585 aa).

An N-terminal signal peptide occupies residues 1 to 32; it reads MENTGWMGKGHRMTPACPLLLSVILSLRLATA. Topologically, residues 33 to 936 are extracellular; it reads FDPAPSACSA…ELAGSPSVPL (904 aa). Asn-106, Asn-191, and Asn-192 each carry an N-linked (GlcNAc...) asparagine glycan. Residues 229–238 are compositionally biased toward low complexity; sequence AGAGSTTTTS. Positions 229 to 271 are disordered; the sequence is AGAGSTTTTSPGPPAAHTLSNALVPGGPAPPAEADLHSGSSND. The O-linked (Xyl...) (chondroitin sulfate) serine glycan is linked to Ser-266. TSP type-1 domains are found at residues 309–362, 364–417, 419–472, and 475–528; these read DPAA…ATCP, HGVW…AACP, EGQW…LECP, and DSKW…KRCP. 14 cysteine pairs are disulfide-bonded: Cys-321–Cys-355, Cys-325–Cys-361, Cys-336–Cys-345, Cys-376–Cys-411, Cys-380–Cys-416, Cys-391–Cys-401, Cys-431–Cys-466, Cys-435–Cys-471, Cys-446–Cys-456, Cys-487–Cys-522, Cys-491–Cys-527, Cys-502–Cys-512, Cys-534–Cys-569, and Cys-557–Cys-587. Residue Asn-356 is glycosylated (N-linked (GlcNAc...) asparagine). The N-linked (GlcNAc...) asparagine glycan is linked to Asn-437. N-linked (GlcNAc...) asparagine glycosylation is found at Asn-560 and Asn-645. One can recognise a GAIN-B domain in the interval 757-924; it reads DRLFLPKEVL…AVLAQPPKDL (168 aa). Positions 767–806 are disordered; it reads SLSSPGKPATSGAAGSPGRGRGPGTVPPGPGHSHQRLLPA. A compositionally biased stretch (low complexity) spans 769 to 780; that stretch reads SSPGKPATSGAA. Asn-867 carries N-linked (GlcNAc...) asparagine glycosylation. Cystine bridges form between Cys-874–Cys-906 and Cys-894–Cys-908. The tract at residues 874 to 924 is GPS; the sequence is CASWDYSRADASSGDWDTENCQTLETQAAHTRCQCQHLSTFAVLAQPPKDL. A helical membrane pass occupies residues 937–957; sequence VIGCAVSCMALLTLLAIYAAF. Residues 958–965 lie on the Cytoplasmic side of the membrane; the sequence is WRFIKSER. Residues 966–986 traverse the membrane as a helical segment; that stretch reads SIILLNFCLSILASNILILVG. The Extracellular segment spans residues 987–994; it reads QSRVLSKG. A helical transmembrane segment spans residues 995-1015; it reads VCTMTAAFLHFFFLSSFCWVL. Residues 1016–1036 are Cytoplasmic-facing; it reads TEAWQSYLAVIGRMRTRLVRK. A helical transmembrane segment spans residues 1037–1057; it reads RFLCLGWGLPALVVAVSVGFT. Residues 1058-1078 are Extracellular-facing; the sequence is RTKGYGTSSYCWLSLEGGLLY. The chain crosses the membrane as a helical span at residues 1079–1099; that stretch reads AFVGPAAVIVLVNMLIGIIVF. Topologically, residues 1100–1121 are cytoplasmic; that stretch reads NKLMARDGISDKSKKQRAGSER. Residues 1122 to 1142 traverse the membrane as a helical segment; it reads CPWASLLLPCSACGAVPSPLL. At 1143–1153 the chain is on the extracellular side; that stretch reads SSASARNAMAS. A helical membrane pass occupies residues 1154 to 1174; that stretch reads LWSSCVVLPLLALTWMSAVLA. Over 1175 to 1585 the chain is Cytoplasmic; sequence MTDRRSVLFQ…PPDGDFQTEV (411 aa). Position 1351 is a phosphotyrosine (Tyr-1351). Disordered regions lie at residues 1359 to 1385, 1423 to 1454, and 1498 to 1585; these read LSLQ…PRRA, FQPP…GSTM, and YRSQ…QTEV. The span at 1372 to 1382 shows a compositional bias: basic and acidic residues; the sequence is DAPRARPEGTP. Residues 1543–1552 are compositionally biased toward polar residues; it reads SWSTFKSMTL. Residues 1575–1585 show a composition bias toward acidic residues; it reads EPPDGDFQTEV.

Belongs to the G-protein coupled receptor 2 family. Adhesion G-protein coupled receptor (ADGR) subfamily. In terms of assembly, heterodimer of 2 chains generated by proteolytic processing; the large extracellular N-terminal fragment and the membrane-bound C-terminal fragment predominantly remain associated and non-covalently linked. Interacts with GABPB2. Interacts (via carboxy-terminus) with TAX1BP3. Interacts with GNAZ. Interacts with SH3GL2. In terms of processing, glycosylated. Post-translationally, autoproteolytically processed at the GPS region of the GAIN-B domain; this cleavage modulates receptor activity. Additionally, furin is involved in the cleavage at another site, in the middle of the extracellular domain, generating a soluble fragment. As to expression, detected in cerebrospinal fluid (at protein level). Strongly expressed in brain. Also detected in heart, thymus, skeletal muscle, and different cell lines.

It localises to the cell membrane. The protein resides in the secreted. With respect to regulation, receptor activity is regulated by proteolytic processing. The long N-terminal has a an inhibitory effect on the constitutive signaling activity. Removal of the N-terminal region induces an increase of the receptor activity. Functionally, orphan G-protein coupled receptor involved in cell adhesion and probably in cell-cell interactions. Activates NFAT-signaling pathway, a transcription factor, via the G-protein GNAZ. Involved in angiogenesis inhibition. The sequence is that of Adhesion G protein-coupled receptor B2 from Homo sapiens (Human).